The sequence spans 102 residues: Large ribosomal subunit protein uL24 (102 aa).

It belongs to the universal ribosomal protein uL24 family. In terms of assembly, part of the 50S ribosomal subunit.

Functionally, one of two assembly initiator proteins, it binds directly to the 5'-end of the 23S rRNA, where it nucleates assembly of the 50S subunit. One of the proteins that surrounds the polypeptide exit tunnel on the outside of the subunit. The polypeptide is Large ribosomal subunit protein uL24 (Limosilactobacillus fermentum (strain NBRC 3956 / LMG 18251) (Lactobacillus fermentum)).